The following is a 142-amino-acid chain: Regulator of ribonuclease activity B (142 aa).

Positions 117–142 (PNADEDEYGEDGEFFDDEFADDDEKR) are disordered.

Belongs to the RraB family. In terms of assembly, interacts with the C-terminal region of Rne.

Its subcellular location is the cytoplasm. In terms of biological role, globally modulates RNA abundance by binding to RNase E (Rne) and regulating its endonucleolytic activity. Can modulate Rne action in a substrate-dependent manner by altering the composition of the degradosome. The protein is Regulator of ribonuclease activity B of Actinobacillus succinogenes (strain ATCC 55618 / DSM 22257 / CCUG 43843 / 130Z).